Consider the following 437-residue polypeptide: Glucose-1-phosphate adenylyltransferase (437 aa).

Alpha-D-glucose 1-phosphate-binding positions include tyrosine 113, glycine 179, 194 to 195 (EK), and serine 212.

This sequence belongs to the bacterial/plant glucose-1-phosphate adenylyltransferase family. As to quaternary structure, homotetramer.

The catalysed reaction is alpha-D-glucose 1-phosphate + ATP + H(+) = ADP-alpha-D-glucose + diphosphate. Its pathway is glycan biosynthesis; glycogen biosynthesis. Functionally, involved in the biosynthesis of ADP-glucose, a building block required for the elongation reactions to produce glycogen. Catalyzes the reaction between ATP and alpha-D-glucose 1-phosphate (G1P) to produce pyrophosphate and ADP-Glc. This is Glucose-1-phosphate adenylyltransferase from Haemophilus influenzae (strain ATCC 51907 / DSM 11121 / KW20 / Rd).